A 166-amino-acid chain; its full sequence is Large ribosomal subunit protein uL10 (166 aa).

It belongs to the universal ribosomal protein uL10 family. Part of the ribosomal stalk of the 50S ribosomal subunit. The N-terminus interacts with L11 and the large rRNA to form the base of the stalk. The C-terminus forms an elongated spine to which L12 dimers bind in a sequential fashion forming a multimeric L10(L12)X complex.

Functionally, forms part of the ribosomal stalk, playing a central role in the interaction of the ribosome with GTP-bound translation factors. The polypeptide is Large ribosomal subunit protein uL10 (Alkaliphilus metalliredigens (strain QYMF)).